Consider the following 328-residue polypeptide: Porphobilinogen deaminase (328 aa).

Residue cysteine 250 is modified to S-(dipyrrolylmethanemethyl)cysteine.

This sequence belongs to the HMBS family. In terms of assembly, monomer. Dipyrromethane serves as cofactor.

It carries out the reaction 4 porphobilinogen + H2O = hydroxymethylbilane + 4 NH4(+). Its pathway is porphyrin-containing compound metabolism; protoporphyrin-IX biosynthesis; coproporphyrinogen-III from 5-aminolevulinate: step 2/4. Functionally, tetrapolymerization of the monopyrrole PBG into the hydroxymethylbilane pre-uroporphyrinogen in several discrete steps. In Burkholderia ambifaria (strain ATCC BAA-244 / DSM 16087 / CCUG 44356 / LMG 19182 / AMMD) (Burkholderia cepacia (strain AMMD)), this protein is Porphobilinogen deaminase.